A 210-amino-acid chain; its full sequence is MKGKFIVIEGIDGCGKTTQIDEISRWLPTSGLMGKNSKLIKTREPGGSLLGKKLRNLILDNNKNNKPSSLAELLLYSADRAEHVSKIISPALKKEDWVISDRFSDSTLAYQGYGRHINLEIIKNIESIVCQGEYPDLTIFLEISAEESILRRKNFVPDRMESEGINFLQKVNEGFKLIAKEKKWKVISATQNITAISNEIKETLLKTFRN.

10–17 (GIDGCGKT) lines the ATP pocket.

This sequence belongs to the thymidylate kinase family.

The enzyme catalyses dTMP + ATP = dTDP + ADP. In terms of biological role, phosphorylation of dTMP to form dTDP in both de novo and salvage pathways of dTTP synthesis. The polypeptide is Thymidylate kinase (Prochlorococcus marinus (strain MIT 9515)).